The sequence spans 317 residues: Adenine deaminase (317 aa).

Residues His14, His16, and His194 each coordinate Zn(2+). Glu197 acts as the Proton donor in catalysis. Asp275 contributes to the Zn(2+) binding site. Position 276 (Asp276) interacts with substrate.

Belongs to the metallo-dependent hydrolases superfamily. Adenosine and AMP deaminases family. Adenine deaminase type 2 subfamily. Zn(2+) serves as cofactor.

It carries out the reaction adenine + H2O + H(+) = hypoxanthine + NH4(+). Functionally, catalyzes the hydrolytic deamination of adenine to hypoxanthine. Plays an important role in the purine salvage pathway and in nitrogen catabolism. This is Adenine deaminase from Pseudomonas syringae pv. syringae (strain B728a).